The following is a 138-amino-acid chain: Large-conductance mechanosensitive channel (138 aa).

Transmembrane regions (helical) follow at residues V15–V35, I38–Q58, and G80–V100.

Belongs to the MscL family. As to quaternary structure, homopentamer.

The protein localises to the cell inner membrane. In terms of biological role, channel that opens in response to stretch forces in the membrane lipid bilayer. May participate in the regulation of osmotic pressure changes within the cell. The polypeptide is Large-conductance mechanosensitive channel (Brucella ovis (strain ATCC 25840 / 63/290 / NCTC 10512)).